A 335-amino-acid chain; its full sequence is Glycerol-3-phosphate dehydrogenase [NAD(P)+] (335 aa).

NADPH-binding residues include S15, Y16, R36, and K110. Sn-glycerol 3-phosphate-binding residues include K110, G139, and T141. A143 lines the NADPH pocket. K195, D248, S258, R259, and N260 together coordinate sn-glycerol 3-phosphate. Residue K195 is the Proton acceptor of the active site. R259 contributes to the NADPH binding site. Positions 283 and 285 each coordinate NADPH.

This sequence belongs to the NAD-dependent glycerol-3-phosphate dehydrogenase family.

The protein localises to the cytoplasm. It catalyses the reaction sn-glycerol 3-phosphate + NAD(+) = dihydroxyacetone phosphate + NADH + H(+). The catalysed reaction is sn-glycerol 3-phosphate + NADP(+) = dihydroxyacetone phosphate + NADPH + H(+). It participates in membrane lipid metabolism; glycerophospholipid metabolism. Catalyzes the reduction of the glycolytic intermediate dihydroxyacetone phosphate (DHAP) to sn-glycerol 3-phosphate (G3P), the key precursor for phospholipid synthesis. In Pseudoalteromonas translucida (strain TAC 125), this protein is Glycerol-3-phosphate dehydrogenase [NAD(P)+].